The sequence spans 193 residues: Dephospho-CoA kinase (193 aa).

A DPCK domain is found at 5 to 193 (IIGLTGGIAS…KKVERFCETI (189 aa)). 13–18 (ASGKST) lines the ATP pocket.

Belongs to the CoaE family.

The protein resides in the cytoplasm. The enzyme catalyses 3'-dephospho-CoA + ATP = ADP + CoA + H(+). It participates in cofactor biosynthesis; coenzyme A biosynthesis; CoA from (R)-pantothenate: step 5/5. In terms of biological role, catalyzes the phosphorylation of the 3'-hydroxyl group of dephosphocoenzyme A to form coenzyme A. The sequence is that of Dephospho-CoA kinase from Fusobacterium nucleatum subsp. nucleatum (strain ATCC 25586 / DSM 15643 / BCRC 10681 / CIP 101130 / JCM 8532 / KCTC 2640 / LMG 13131 / VPI 4355).